Reading from the N-terminus, the 196-residue chain is Putative NADH dehydrogenase/NAD(P)H nitroreductase SCO5049 (196 aa).

It belongs to the nitroreductase family. HadB/RutE subfamily. The cofactor is FMN.

This is Putative NADH dehydrogenase/NAD(P)H nitroreductase SCO5049 from Streptomyces coelicolor (strain ATCC BAA-471 / A3(2) / M145).